The sequence spans 37 residues: Large ribosomal subunit protein bL36 (37 aa).

This sequence belongs to the bacterial ribosomal protein bL36 family.

The polypeptide is Large ribosomal subunit protein bL36 (Thermus thermophilus (strain ATCC BAA-163 / DSM 7039 / HB27)).